Here is a 155-residue protein sequence, read N- to C-terminus: Molybdopterin synthase catalytic subunit 2 (155 aa).

Residues 101 to 102 (HR), Lys117, and 124 to 126 (KKE) contribute to the substrate site.

It belongs to the MoaE family. MOCS2B subfamily. As to quaternary structure, heterotetramer; composed of 2 small (MOCS2A) and 2 large (MOCS2B) subunits.

It is found in the cytoplasm. It catalyses the reaction 2 [molybdopterin-synthase sulfur-carrier protein]-C-terminal-Gly-aminoethanethioate + cyclic pyranopterin phosphate + H2O = molybdopterin + 2 [molybdopterin-synthase sulfur-carrier protein]-C-terminal Gly-Gly + 2 H(+). The protein operates within cofactor biosynthesis; molybdopterin biosynthesis. Functionally, catalytic subunit of the molybdopterin synthase complex, a complex that catalyzes the conversion of precursor Z into molybdopterin. Acts by mediating the incorporation of 2 sulfur atoms from thiocarboxylated MOCS2A into precursor Z to generate a dithiolene group. This is Molybdopterin synthase catalytic subunit 2 from Aedes aegypti (Yellowfever mosquito).